A 291-amino-acid polypeptide reads, in one-letter code: N-acetylmannosamine kinase (291 aa).

ATP contacts are provided by residues 5-12 (AIDIGGTK) and 132-139 (GVGGGVVS). Zn(2+)-binding residues include His156, Cys166, Cys168, and Cys173.

Belongs to the ROK (NagC/XylR) family. NanK subfamily. In terms of assembly, homodimer.

The catalysed reaction is an N-acyl-D-mannosamine + ATP = an N-acyl-D-mannosamine 6-phosphate + ADP + H(+). The protein operates within amino-sugar metabolism; N-acetylneuraminate degradation; D-fructose 6-phosphate from N-acetylneuraminate: step 2/5. Catalyzes the phosphorylation of N-acetylmannosamine (ManNAc) to ManNAc-6-P. The polypeptide is N-acetylmannosamine kinase (Escherichia coli (strain K12 / MC4100 / BW2952)).